A 359-amino-acid polypeptide reads, in one-letter code: tRNA N6-adenosine threonylcarbamoyltransferase (359 aa).

Fe cation is bound by residues histidine 115 and histidine 119. Residues leucine 137–glycine 141, aspartate 170, glycine 183, and asparagine 283 each bind substrate. Position 311 (aspartate 311) interacts with Fe cation. The interval alanine 328–alanine 359 is disordered.

It belongs to the KAE1 / TsaD family. Fe(2+) is required as a cofactor.

The protein resides in the cytoplasm. The enzyme catalyses L-threonylcarbamoyladenylate + adenosine(37) in tRNA = N(6)-L-threonylcarbamoyladenosine(37) in tRNA + AMP + H(+). Required for the formation of a threonylcarbamoyl group on adenosine at position 37 (t(6)A37) in tRNAs that read codons beginning with adenine. Is involved in the transfer of the threonylcarbamoyl moiety of threonylcarbamoyl-AMP (TC-AMP) to the N6 group of A37, together with TsaE and TsaB. TsaD likely plays a direct catalytic role in this reaction. In Brucella ovis (strain ATCC 25840 / 63/290 / NCTC 10512), this protein is tRNA N6-adenosine threonylcarbamoyltransferase.